The primary structure comprises 360 residues: DNA replication and repair protein RecF (360 aa).

33–40 provides a ligand contact to ATP; that stretch reads GENGSGKT.

Belongs to the RecF family.

It localises to the cytoplasm. The RecF protein is involved in DNA metabolism; it is required for DNA replication and normal SOS inducibility. RecF binds preferentially to single-stranded, linear DNA. It also seems to bind ATP. The chain is DNA replication and repair protein RecF from Rickettsia bellii (strain OSU 85-389).